We begin with the raw amino-acid sequence, 246 residues long: MQWIDDGLVIGLRKHGETGVVLELMTPEHGRHLGLVHGGRSRRMQPMLQPGNTLRATWRARLDGALGAYAVEPLTLNASRLMDSGLALYGVAHLSALLRLLPERDPHPALYEAAQILIAHLDDPEIAPALMVRFELALLAGLGFGLDLSHCAATGANDALVYVSPKSGRAVSASAGEPFRDRLLPLPPFLRDRDQPGSGWRTPDTQDVREGFTLTGYFLDQHVWRPRAQDTPEERARFVALGTGQS.

The protein belongs to the RecO family.

Functionally, involved in DNA repair and RecF pathway recombination. The sequence is that of DNA repair protein RecO from Methylorubrum extorquens (strain CM4 / NCIMB 13688) (Methylobacterium extorquens).